Reading from the N-terminus, the 272-residue chain is N-acetylmuramoyl-L-alanine amidase CwlA (272 aa).

The N-acetylmuramoyl-L-alanine amidase domain occupies 24 to 142; it reads KAEYITIHNT…QDWNGKYCPH (119 aa).

Belongs to the N-acetylmuramoyl-L-alanine amidase 2 family.

The catalysed reaction is Hydrolyzes the link between N-acetylmuramoyl residues and L-amino acid residues in certain cell-wall glycopeptides.. Functionally, autolysins are involved in some important biological processes such as cell separation, cell-wall turnover, competence for genetic transformation, formation of the flagella and sporulation. This chain is N-acetylmuramoyl-L-alanine amidase CwlA (cwlA), found in Bacillus subtilis (strain 168).